The following is a 432-amino-acid chain: tRNA(Ile)-lysidine synthase (432 aa).

20–25 (SGGLDS) provides a ligand contact to ATP.

Belongs to the tRNA(Ile)-lysidine synthase family.

Its subcellular location is the cytoplasm. The enzyme catalyses cytidine(34) in tRNA(Ile2) + L-lysine + ATP = lysidine(34) in tRNA(Ile2) + AMP + diphosphate + H(+). Ligates lysine onto the cytidine present at position 34 of the AUA codon-specific tRNA(Ile) that contains the anticodon CAU, in an ATP-dependent manner. Cytidine is converted to lysidine, thus changing the amino acid specificity of the tRNA from methionine to isoleucine. The sequence is that of tRNA(Ile)-lysidine synthase from Shigella flexneri.